A 606-amino-acid polypeptide reads, in one-letter code: Mitogen-activated protein kinase 20 (606 aa).

The Protein kinase domain occupies 25–316 (FKVQEVIGKG…AEEALADPYF (292 aa)). ATP is bound by residues 31–39 (IGKGSYGVV) and Lys-54. Asp-151 serves as the catalytic Proton acceptor. Position 187 is a phosphothreonine (Thr-187). The TXY signature appears at 187–189 (TDY). Tyr-189 carries the post-translational modification Phosphotyrosine. Phosphothreonine is present on Thr-192.

It belongs to the protein kinase superfamily. CMGC Ser/Thr protein kinase family. MAP kinase subfamily. In terms of processing, dually phosphorylated on Thr-187 and Tyr-189, which activates the enzyme.

It catalyses the reaction L-seryl-[protein] + ATP = O-phospho-L-seryl-[protein] + ADP + H(+). The catalysed reaction is L-threonyl-[protein] + ATP = O-phospho-L-threonyl-[protein] + ADP + H(+). With respect to regulation, activated by threonine and tyrosine phosphorylation. The polypeptide is Mitogen-activated protein kinase 20 (MPK20) (Arabidopsis thaliana (Mouse-ear cress)).